A 598-amino-acid chain; its full sequence is Elongation factor 4 (598 aa).

Residues 5-187 (ANIRNFSIIA…ALVEFIPAPT (183 aa)) form the tr-type G domain. GTP contacts are provided by residues 17-22 (DHGKST) and 134-137 (NKID).

This sequence belongs to the TRAFAC class translation factor GTPase superfamily. Classic translation factor GTPase family. LepA subfamily.

It localises to the cell inner membrane. It catalyses the reaction GTP + H2O = GDP + phosphate + H(+). Functionally, required for accurate and efficient protein synthesis under certain stress conditions. May act as a fidelity factor of the translation reaction, by catalyzing a one-codon backward translocation of tRNAs on improperly translocated ribosomes. Back-translocation proceeds from a post-translocation (POST) complex to a pre-translocation (PRE) complex, thus giving elongation factor G a second chance to translocate the tRNAs correctly. Binds to ribosomes in a GTP-dependent manner. In Psychrobacter arcticus (strain DSM 17307 / VKM B-2377 / 273-4), this protein is Elongation factor 4.